Consider the following 94-residue polypeptide: Co-chaperonin GroES (94 aa).

The protein belongs to the GroES chaperonin family. Heptamer of 7 subunits arranged in a ring. Interacts with the chaperonin GroEL.

The protein localises to the cytoplasm. In terms of biological role, together with the chaperonin GroEL, plays an essential role in assisting protein folding. The GroEL-GroES system forms a nano-cage that allows encapsulation of the non-native substrate proteins and provides a physical environment optimized to promote and accelerate protein folding. GroES binds to the apical surface of the GroEL ring, thereby capping the opening of the GroEL channel. The polypeptide is Co-chaperonin GroES (Thermoanaerobacter pseudethanolicus (strain ATCC 33223 / 39E) (Clostridium thermohydrosulfuricum)).